We begin with the raw amino-acid sequence, 327 residues long: Elongation factor P--(R)-beta-lysine ligase (327 aa).

Residue 80–82 (SPE) participates in substrate binding. Residues 104–106 (RNE) and Asn113 each bind ATP. Tyr122 contacts substrate. 246 to 247 (EL) is an ATP binding site. Glu253 provides a ligand contact to substrate. ATP is bound at residue Gly302.

This sequence belongs to the class-II aminoacyl-tRNA synthetase family. EpmA subfamily. As to quaternary structure, homodimer.

The catalysed reaction is D-beta-lysine + L-lysyl-[protein] + ATP = N(6)-((3R)-3,6-diaminohexanoyl)-L-lysyl-[protein] + AMP + diphosphate + H(+). Functionally, with EpmB is involved in the beta-lysylation step of the post-translational modification of translation elongation factor P (EF-P). Catalyzes the ATP-dependent activation of (R)-beta-lysine produced by EpmB, forming a lysyl-adenylate, from which the beta-lysyl moiety is then transferred to the epsilon-amino group of a conserved specific lysine residue in EF-P. The sequence is that of Elongation factor P--(R)-beta-lysine ligase from Haemophilus ducreyi (strain 35000HP / ATCC 700724).